Consider the following 642-residue polypeptide: Serotransferrin (642 aa).

2 Transferrin-like domains span residues 1–280 and 290–621; these read GIKE…SLKK and IKWC…SLRQ. 2 residues coordinate Fe(3+): D25 and Y54. 3 cysteine pairs are disulfide-bonded: C77–C158, C121–C137, and C186–C200. The hydrogencarbonate site is built by T79, K83, A85, and G86. Position 152 (Y152) interacts with Fe(3+). H208 is a binding site for Fe(3+). 2 cysteine pairs are disulfide-bonded: C293–C329 and C303–C320. D344 serves as a coordination point for Fe(3+). 7 cysteine pairs are disulfide-bonded: C354–C633, C369–C594, C402–C480, C426–C622, C436–C450, C447–C463, and C520–C535. N365 carries an N-linked (GlcNAc...) asparagine glycan. Y379 is a binding site for Fe(3+). 4 residues coordinate hydrogencarbonate: T404, R408, A410, and G411. Y474 contacts Fe(3+). H543 serves as a coordination point for Fe(3+).

This sequence belongs to the transferrin family. Monomer. In terms of tissue distribution, brain and liver; to a lesser extent in kidney and heart.

It localises to the secreted. Functionally, transferrins are iron binding transport proteins which can bind two Fe(3+) ions in association with the binding of an anion, usually bicarbonate. This Gadus morhua (Atlantic cod) protein is Serotransferrin (tf).